Consider the following 2000-residue polypeptide: MAQALLVPPGPESFRLFTRESLAAIEKRAAEEKAKKPKKEQDNDDENKPKPNSDLEAGKNLPFIYGDIPPEMVSEPLEDLDPYYINKKTFIVMNKGKAIFRFSATSALYILTPLNPVRKIAIKILVHSLFSMLIMCTILTNCVFMTLSNPPDWTKNVEYTFTGIYTFESLIKILARGFCLEDFTFLRDPWNWLDFSVIVMAYVTEFVSLGNVSALRTFRVLRALKTISVIPGLKTIVGALIQSVKKLSDVMILTVFCLSVFALIGLQLFMGNLRNKCLQWPPSDSAFETNTTSYFNGTMDSNGTFVNVTMSTFNWKDYIGDDSHFYVLDGQKDPLLCGNGSDAGQCPEGYICVKAGRNPNYGYTSFDTFSWAFLSLFRLMTQDYWENLYQLTLRAAGKTYMIFFVLVIFLGSFYLVNLILAVVAMAYEEQNQATLEEAEQKEAEFQQMLEQLKKQQEEAQAVAAASAASRDFSGIGGLGELLESSSEASKLSSKSAKEWRNRRKKRRQREHLEGNNKGERDSFPKSESEDSVKRSSFLFSMDGNRLTSDKKFCSPHQSLLSIRGSLFSPRRNSKTSIFSFRGRAKDVGSENDFADDEHSTFEDSESRRDSLFVPHRHGERRNSNVSQASMSSRMVPGLPANGKMHSTVDCNGVVSLVGGPSALTSPTGQLPPEGTTTETEVRKRRLSSYQISMEMLEDSSGRQRAVSIASILTNTMEELEESRQKCPPCWYRFANVFLIWDCCDAWLKVKHLVNLIVMDPFVDLAITICIVLNTLFMAMEHYPMTEQFSSVLTVGNLVFTGIFTAEMVLKIIAMDPYYYFQEGWNIFDGIIVSLSLMELGLSNVEGLSVLRSFRLLRVFKLAKSWPTLNMLIKIIGNSVGALGNLTLVLAIIVFIFAVVGMQLFGKSYKECVCKINDDCTLPRWHMNDFFHSFLIVFRVLCGEWIETMWDCMEVAGQTMCLIVFMLVMVIGNLVVLNLFLALLLSSFSSDNLAATDDDNEMNNLQIAVGRMQKGIDYVKNKMRECFQKAFFRKPKVIEIHEGNKIDSCMSNNTGIEISKELNYLRDGNGTTSGVGTGSSVEKYVIDENDYMSFINNPSLTVTVPIAVGESDFENLNTEEFSSESELEESKEKLNATSSSEGSTVDVVLPREGEQAETEPEEDLKPEACFTEGCIKKFPFCQVSTEEGKGKIWWNLRKTCYSIVEHNWFETFIVFMILLSSGALAFEDIYIEQRKTIKTMLEYADKVFTYIFILEMLLKWVAYGFQTYFTNAWCWLDFLIVDVSLVSLVANALGYSELGAIKSLRTLRALRPLRALSRFEGMRVVVNALVGAIPSIMNVLLVCLIFWLIFSIMGVNLFAGKFYHCVNMTTGNMFDISDVNNLSDCQALGKQARWKNVKVNFDNVGAGYLALLQVATFKGWMDIMYAAVDSRDVKLQPVYEENLYMYLYFVIFIIFGSFFTLNLFIGVIIDNFNQQKKKFGGQDIFMTEEQKKYYNAMKKLGSKKPQKPIPRPANKFQGMVFDFVTRQVFDISIMILICLNMVTMMVETDDQGKYMTLVLSRINLVFIVLFTGEFVLKLVSLRHYYFTIGWNIFDFVVVILSIVGMFLAEMIEKYFVSPTLFRVIRLARIGRILRLIKGAKGIRTLLFALMMSLPALFNIGLLLFLVMFIYAIFGMSNFAYVKKEAGIDDMFNFETFGNSMICLFQITTSAGWDGLLAPILNSAPPDCDPDTIHPGSSVKGDCGNPSVGIFFFVSYIIISFLVVVNMYIAVILENFSVATEESAEPLSEDDFEMFYEVWEKFDPDATQFIEFSKLSDFAAALDPPLLIAKPNKVQLIAMDLPMVSGDRIHCLDILFAFTKRVLGESGEMDALRIQMEDRFMASNPSKVSYEPITTTLKRKQEEVSAAIIQRNFRCYLLKQRLKNISSNYNKEAIKGRIDLPIKQDMIIDKLNGNSTPEKTDGSSSTTSPPSYDSVTKPDKEKFEKDKPEKESKGKEVRENQK.

At 1–128 the chain is on the cytoplasmic side; it reads MAQALLVPPG…KIAIKILVHS (128 aa). Residues 28 to 60 are disordered; it reads RAAEEKAKKPKKEQDNDDENKPKPNSDLEAGKN. A compositionally biased stretch (basic and acidic residues) spans 46–57; that stretch reads ENKPKPNSDLEA. The I repeat unit spans residues 110 to 455; the sequence is ILTPLNPVRK…QQMLEQLKKQ (346 aa). The chain crosses the membrane as a helical span at residues 129-146; the sequence is LFSMLIMCTILTNCVFMT. The Extracellular segment spans residues 147–152; that stretch reads LSNPPD. The chain crosses the membrane as a helical span at residues 153 to 174; sequence WTKNVEYTFTGIYTFESLIKIL. The Cytoplasmic segment spans residues 175–188; the sequence is ARGFCLEDFTFLRD. The helical transmembrane segment at 189-206 threads the bilayer; it reads PWNWLDFSVIVMAYVTEF. Residues 207-213 are Extracellular-facing; the sequence is VSLGNVS. An N-linked (GlcNAc...) asparagine glycan is attached at asparagine 211. Residues 214-235 traverse the membrane as a helical segment; the sequence is ALRTFRVLRALKTISVIPGLKT. At 236 to 249 the chain is on the cytoplasmic side; the sequence is IVGALIQSVKKLSD. The chain crosses the membrane as a helical span at residues 250–269; that stretch reads VMILTVFCLSVFALIGLQLF. The Extracellular portion of the chain corresponds to 270–369; it reads MGNLRNKCLQ…NYGYTSFDTF (100 aa). 5 N-linked (GlcNAc...) asparagine glycosylation sites follow: asparagine 290, asparagine 296, asparagine 302, asparagine 307, and asparagine 339. An intramembrane region (pore-forming) is located at residues 370–386; sequence SWAFLSLFRLMTQDYWE. Residues 387–397 are Extracellular-facing; sequence NLYQLTLRAAG. The chain crosses the membrane as a helical span at residues 398 to 424; that stretch reads KTYMIFFVLVIFLGSFYLVNLILAVVA. Residues 425–761 lie on the Cytoplasmic side of the membrane; the sequence is MAYEEQNQAT…LVNLIVMDPF (337 aa). Phosphoserine is present on residues serine 484, serine 485, and serine 486. 3 disordered regions span residues 493–528, 587–631, and 662–681; these read SKSAKEWRNRRKKRRQREHLEGNNKGERDSFPKSES, VGSE…ASMS, and ALTSPTGQLPPEGTTTETEV. Over residues 500 to 509 the composition is skewed to basic residues; that stretch reads RNRRKKRRQR. 2 stretches are compositionally biased toward basic and acidic residues: residues 510 to 528 and 596 to 610; these read EHLEGNNKGERDSFPKSES and DEHSTFEDSESRRDS. The segment covering 662-678 has biased composition (polar residues); sequence ALTSPTGQLPPEGTTTE. The II repeat unit spans residues 742–1014; the sequence is CCDAWLKVKH…QIAVGRMQKG (273 aa). Residues 762–779 form a helical membrane-spanning segment; that stretch reads VDLAITICIVLNTLFMAM. Over 780–787 the chain is Extracellular; sequence EHYPMTEQ. Residues 788-812 traverse the membrane as a helical segment; it reads FSSVLTVGNLVFTGIFTAEMVLKII. The Cytoplasmic segment spans residues 813–822; the sequence is AMDPYYYFQE. Residues 823-842 form a helical membrane-spanning segment; the sequence is GWNIFDGIIVSLSLMELGLS. Residues 843 to 846 lie on the Extracellular side of the membrane; the sequence is NVEG. Residues 847–865 form a helical membrane-spanning segment; it reads LSVLRSFRLLRVFKLAKSW. Residues 866–883 lie on the Cytoplasmic side of the membrane; that stretch reads PTLNMLIKIIGNSVGALG. The chain crosses the membrane as a helical span at residues 884 to 904; sequence NLTLVLAIIVFIFAVVGMQLF. Topologically, residues 905–929 are extracellular; that stretch reads GKSYKECVCKINDDCTLPRWHMNDF. Cysteines 913 and 919 form a disulfide. The pore-forming intramembrane region spans 930–945; it reads FHSFLIVFRVLCGEWI. Over 946–956 the chain is Extracellular; that stretch reads ETMWDCMEVAG. A disulfide bridge links cysteine 951 with cysteine 960. A helical membrane pass occupies residues 957–983; sequence QTMCLIVFMLVMVIGNLVVLNLFLALL. Topologically, residues 984–1205 are cytoplasmic; that stretch reads LSSFSSDNLA…RKTCYSIVEH (222 aa). Positions 1118–1162 are disordered; that stretch reads EEFSSESELEESKEKLNATSSSEGSTVDVVLPREGEQAETEPEED. Residues 1188–1499 form an III repeat; sequence KGKIWWNLRK…KKYYNAMKKL (312 aa). The chain crosses the membrane as a helical span at residues 1206-1226; it reads NWFETFIVFMILLSSGALAFE. Topologically, residues 1227–1238 are extracellular; that stretch reads DIYIEQRKTIKT. The chain crosses the membrane as a helical span at residues 1239–1260; the sequence is MLEYADKVFTYIFILEMLLKWV. Residues 1261–1266 lie on the Cytoplasmic side of the membrane; it reads AYGFQT. Residues 1267–1292 traverse the membrane as a helical segment; it reads YFTNAWCWLDFLIVDVSLVSLVANAL. Topologically, residues 1293 to 1301 are extracellular; that stretch reads GYSELGAIK. The chain crosses the membrane as a helical span at residues 1302–1320; that stretch reads SLRTLRALRPLRALSRFEG. At 1321–1333 the chain is on the cytoplasmic side; sequence MRVVVNALVGAIP. The chain crosses the membrane as a helical span at residues 1334–1356; the sequence is SIMNVLLVCLIFWLIFSIMGVNL. Topologically, residues 1357 to 1402 are extracellular; it reads FAGKFYHCVNMTTGNMFDISDVNNLSDCQALGKQARWKNVKVNFDN. A disulfide bridge connects residues cysteine 1364 and cysteine 1384. N-linked (GlcNAc...) asparagine glycans are attached at residues asparagine 1366 and asparagine 1380. The pore-forming intramembrane region spans 1403 to 1419; the sequence is VGAGYLALLQVATFKGW. Topologically, residues 1420–1442 are extracellular; that stretch reads MDIMYAAVDSRDVKLQPVYEENL. The helical transmembrane segment at 1443 to 1468 threads the bilayer; sequence YMYLYFVIFIIFGSFFTLNLFIGVII. Over 1469–1526 the chain is Cytoplasmic; the sequence is DNFNQQKKKFGGQDIFMTEEQKKYYNAMKKLGSKKPQKPIPRPANKFQGMVFDFVTRQ. A Phosphoserine; by PKC modification is found at serine 1501. One copy of the IV repeat lies at 1508–1806; that stretch reads IPRPANKFQG…WEKFDPDATQ (299 aa). The chain crosses the membrane as a helical span at residues 1527–1545; sequence VFDISIMILICLNMVTMMV. Residues 1546 to 1553 are Extracellular-facing; the sequence is ETDDQGKY. Residues 1554–1577 traverse the membrane as a helical segment; it reads MTLVLSRINLVFIVLFTGEFVLKL. The Cytoplasmic segment spans residues 1578-1587; it reads VSLRHYYFTI. The helical transmembrane segment at 1588 to 1605 threads the bilayer; it reads GWNIFDFVVVILSIVGMF. At 1606-1617 the chain is on the extracellular side; the sequence is LAEMIEKYFVSP. The chain crosses the membrane as a helical span at residues 1618–1640; sequence TLFRVIRLARIGRILRLIKGAKG. Over 1641–1653 the chain is Cytoplasmic; that stretch reads IRTLLFALMMSLP. The chain crosses the membrane as a helical span at residues 1654-1677; it reads ALFNIGLLLFLVMFIYAIFGMSNF. Topologically, residues 1678-1699 are extracellular; that stretch reads AYVKKEAGIDDMFNFETFGNSM. The segment at residues 1700 to 1712 is an intramembrane region (pore-forming); the sequence is ICLFQITTSAGWD. Topologically, residues 1713-1744 are extracellular; the sequence is GLLAPILNSAPPDCDPDTIHPGSSVKGDCGNP. A helical transmembrane segment spans residues 1745 to 1770; it reads SVGIFFFVSYIIISFLVVVNMYIAVI. Residues 1771–2000 are Cytoplasmic-facing; it reads LENFSVATEE…KGKEVRENQK (230 aa). The region spanning 1900–1929 is the IQ domain; sequence EEVSAAIIQRNFRCYLLKQRLKNISSNYNK. Positions 1949–2000 are disordered; it reads LNGNSTPEKTDGSSSTTSPPSYDSVTKPDKEKFEKDKPEKESKGKEVRENQK. Over residues 1974 to 2000 the composition is skewed to basic and acidic residues; it reads TKPDKEKFEKDKPEKESKGKEVRENQK.

This sequence belongs to the sodium channel (TC 1.A.1.10) family. Nav1.3/SCN3A subfamily. In terms of assembly, heterooligomer of an alpha subunit, SCN3A, and 1 to 3 regulatory beta subunits including SCN1B and SCN2B; disulfide-linked with some beta subunits like SCN2B. Interacts with NEDD4L; could regulate expression of SCN3A at the plasma membrane through ubiquitination-regulated endocytosis. Interacts with the conotoxin GVIIJ. In terms of processing, may be ubiquitinated by NEDD4L; which would promote its endocytosis. Phosphorylation at Ser-1501 by PKC in a highly conserved cytoplasmic loop slows inactivation of the sodium channel and reduces peak sodium currents. In terms of tissue distribution, expressed in enterochromaffin cells in both colon and small bowel (at protein level).

It localises to the cell membrane. The protein localises to the basal cell membrane. It carries out the reaction Na(+)(in) = Na(+)(out). Functionally, pore-forming subunit of Nav1.3, a voltage-gated sodium (Nav) channel that directly mediates the depolarizing phase of action potentials in excitable membranes. Navs, also called VGSCs (voltage-gated sodium channels) or VDSCs (voltage-dependent sodium channels), operate by switching between closed and open conformations depending on the voltage difference across the membrane. In the open conformation they allow Na(+) ions to selectively pass through the pore, along their electrochemical gradient. The influx of Na+ ions provokes membrane depolarization, initiating the propagation of electrical signals throughout cells and tissues. In some secretory cell types, it also participates in cell excitability through membrane depolarization and regulates cells responsiveness to stimuli triggering secretion. For instance, it controls the release of serotonin/5-hydroxytryptamine by enterochromaffin cells and is required for both glucagon- and glucose-induced insulin secretion in pancreatic endocrine cells. This chain is Sodium channel protein type 3 subunit alpha, found in Homo sapiens (Human).